Here is a 2248-residue protein sequence, read N- to C-terminus: Zinc finger protein 407 (2248 aa).

Residues 1–32 (MMDSENKPENDEDEKINKEAQDLTKLSSHNED) show a composition bias toward basic and acidic residues. Residues 1–84 (MMDSENKPEN…RRKLDEAEPL (84 aa)) are disordered. C2H2-type zinc fingers lie at residues 186-208 (LKCS…AESH), 215-238 (HTCC…KQAH), and 244-268 (FSCD…GKTH). Disordered regions lie at residues 291 to 322 (KKSR…GLRN) and 494 to 515 (SETQ…GLHS). Positions 494 to 504 (SETQEAEQGQG) are enriched in polar residues. 3 consecutive C2H2-type zinc fingers follow at residues 528–551 (CACT…KRCH), 557–581 (FYCR…SNQH), and 615–639 (FLCT…TEKH). The interval 667 to 700 (ESENAKESMDDSGKASQEEPLKSRVSHGNEVRHS) is disordered. Basic and acidic residues predominate over residues 669–699 (ENAKESMDDSGKASQEEPLKSRVSHGNEVRH). The C2H2-type 7 zinc finger occupies 705-728 (FQCKKCFYKTRSSTVLTRHIKLRH). The tract at residues 821–847 (LSQSGGSTKDDELASTTTPKRGRPKGN) is disordered. C2H2-type zinc fingers lie at residues 850 to 873 (RTCS…RRKH) and 879 to 903 (YLCK…TKKH). The interval 910–962 (EASGKHSSDIIVGPEGGSLEAGKKNAGSAVTMSDEHANKPAESPTSVLEKPDR) is disordered. 2 C2H2-type zinc fingers span residues 1017-1040 (NKCL…KRKH) and 1046-1070 (FYCM…TEKH). Ser1262 bears the Phosphoserine mark. 2 consecutive C2H2-type zinc fingers follow at residues 1444 to 1468 (FHCL…SAGH) and 1486 to 1509 (FKCV…KGQH). The C2H2-type 14; degenerate zinc finger occupies 1537-1561 (NVCKYCGKMCRSSNSMAFLAHIRTH). 8 consecutive C2H2-type zinc fingers follow at residues 1567 to 1589 (FKCK…VKRH), 1595 to 1618 (YKCH…LGKH), 1628 to 1650 (FTCH…MKLH), 1656 to 1680 (FKCT…YRTH), 1686 to 1708 (FLCD…RRQH), 1714 to 1736 (FKCD…KRVH), 1742 to 1767 (YRCP…TGKH), and 1773 to 1796 (YNCP…KEQH).

The protein localises to the nucleus. Its function is as follows. May be involved in transcriptional regulation. The sequence is that of Zinc finger protein 407 (ZNF407) from Homo sapiens (Human).